We begin with the raw amino-acid sequence, 335 residues long: Ketol-acid reductoisomerase (NADP(+)) 2 (335 aa).

Residues 1-180 enclose the KARI N-terminal Rossmann domain; sequence MKTYYEQDAN…GCTRAGVIET (180 aa). NADP(+) contacts are provided by residues 24–27, Arg-47, Ser-51, and 81–84; these read YGSQ and DEQQ. The active site involves His-106. Gly-132 provides a ligand contact to NADP(+). Positions 181-326 constitute a KARI C-terminal knotted domain; sequence TFQEETETDL…EELREMMSWI (146 aa). Asp-189, Glu-193, Glu-225, and Glu-229 together coordinate Mg(2+). Residue Ser-250 participates in substrate binding.

Belongs to the ketol-acid reductoisomerase family. Mg(2+) is required as a cofactor.

It catalyses the reaction (2R)-2,3-dihydroxy-3-methylbutanoate + NADP(+) = (2S)-2-acetolactate + NADPH + H(+). It carries out the reaction (2R,3R)-2,3-dihydroxy-3-methylpentanoate + NADP(+) = (S)-2-ethyl-2-hydroxy-3-oxobutanoate + NADPH + H(+). It functions in the pathway amino-acid biosynthesis; L-isoleucine biosynthesis; L-isoleucine from 2-oxobutanoate: step 2/4. Its pathway is amino-acid biosynthesis; L-valine biosynthesis; L-valine from pyruvate: step 2/4. In terms of biological role, involved in the biosynthesis of branched-chain amino acids (BCAA). Catalyzes an alkyl-migration followed by a ketol-acid reduction of (S)-2-acetolactate (S2AL) to yield (R)-2,3-dihydroxy-isovalerate. In the isomerase reaction, S2AL is rearranged via a Mg-dependent methyl migration to produce 3-hydroxy-3-methyl-2-ketobutyrate (HMKB). In the reductase reaction, this 2-ketoacid undergoes a metal-dependent reduction by NADPH to yield (R)-2,3-dihydroxy-isovalerate. In Bacillus thuringiensis subsp. konkukian (strain 97-27), this protein is Ketol-acid reductoisomerase (NADP(+)) 2.